The sequence spans 325 residues: DNA-directed RNA polymerase subunit alpha (325 aa).

Residues 1 to 231 (MQTSLLKPKI…DQLSVFAALE (231 aa)) form an alpha N-terminal domain (alpha-NTD) region. The segment at 246-325 (IDPILLRPVD…ENWPPAGLDK (80 aa)) is alpha C-terminal domain (alpha-CTD).

This sequence belongs to the RNA polymerase alpha chain family. In terms of assembly, homodimer. The RNAP catalytic core consists of 2 alpha, 1 beta, 1 beta' and 1 omega subunit. When a sigma factor is associated with the core the holoenzyme is formed, which can initiate transcription.

It carries out the reaction RNA(n) + a ribonucleoside 5'-triphosphate = RNA(n+1) + diphosphate. DNA-dependent RNA polymerase catalyzes the transcription of DNA into RNA using the four ribonucleoside triphosphates as substrates. The polypeptide is DNA-directed RNA polymerase subunit alpha (Burkholderia multivorans (strain ATCC 17616 / 249)).